The primary structure comprises 621 residues: MGSTVDGEKYIRNLASYIRSHEKRFARAPYRAPNHSIFSDRPVQLQLTVHHLYYLLTKFEELGVNTGPLNIRIENLHSETFPSDYTSFLNQSPKKNDFDDNMSLNSIVTMGSILSNVSSVWSIFSTAPSEASETRNKQRILAILRYIYSCFTKLPAISLVYNPKTPLISQYEEFPLDTAVPITVFKNLSSLEIRGYDIRSIFGWDFLSTTLKSLILHHCDLADLSEVLIKLVLDDAELYRFRSSRQTYPQQPNSQPCEQHPAHANLRRSVSLGSKDYLKSSHPPVHKTLSQSVLVLSKDGNASSSGGTENQSANSSSSLMEKDAILSSSSWSQLLYLRCSSCKLKSIPKNVFLSLQSLVSLDLSGNELTEIPYALGELPQLCSLNLASNKITGCRTFYHISLSHLQILVLSRNHLTSLSGLENVPSLEKLDIRDNSITDVVEFRRLVGNTNFEEAYLSLNPFTKTYSSYRITIFNYFREYPGSKDIMLDGRGPGMLEKMYLSEKASAPERVISLNPVNQKSHSPAIKSSSTLRKASKTRIVDLSAPNSAVFSKNASGGDTSSNVSLLNGSASEEIPQNTESGQVFRKKIEMLRQEAGPEWVDALMKESVVKHKFRNKDESV.

Serine 269, serine 271, serine 274, serine 290, and serine 292 each carry phosphoserine. LRR repeat units follow at residues 333–354 (QLLYLRCSSCKLKSIPKNVFLS), 357–379 (SLVSLDLSGNELTEIPYALGELP), 380–401 (QLCSLNLASNKITGCRTFYHIS), 404–425 (HLQILVLSRNHLTSLSGLENVP), 426–447 (SLEKLDIRDNSITDVVEFRRLV), and 451–472 (NFEEAYLSLNPFTKTYSSYRIT). A disordered region spans residues 552-581 (SKNASGGDTSSNVSLLNGSASEEIPQNTES).

Its subcellular location is the cytoplasm. It is found in the nucleus. It localises to the vacuole membrane. This is an uncharacterized protein from Schizosaccharomyces pombe (strain 972 / ATCC 24843) (Fission yeast).